Consider the following 158-residue polypeptide: Ribonuclease H (158 aa).

The 142-residue stretch at Glu-3–Glu-144 folds into the RNase H type-1 domain. 4 residues coordinate Mg(2+): Asp-12, Glu-50, Asp-72, and Asp-136.

The protein belongs to the RNase H family. Monomer. The cofactor is Mg(2+).

Its subcellular location is the cytoplasm. It carries out the reaction Endonucleolytic cleavage to 5'-phosphomonoester.. In terms of biological role, endonuclease that specifically degrades the RNA of RNA-DNA hybrids. The polypeptide is Ribonuclease H (Shewanella sp. (strain MR-7)).